The sequence spans 169 residues: Group 2 truncated hemoglobin 3-2 (169 aa).

His-99 provides a ligand contact to heme b.

It belongs to the truncated hemoglobin family. Group II subfamily. In terms of assembly, homodimer when ferric.

Functionally, hemoglobin-like protein that exhibits an unusual concentration-independent binding of O(2) and CO. Required for general plant development and during nodulation. May promote shoot organogenesis from root explants. In Medicago truncatula (Barrel medic), this protein is Group 2 truncated hemoglobin 3-2.